Here is a 260-residue protein sequence, read N- to C-terminus: ATP synthase subunit a (260 aa).

5 helical membrane passes run 27-47 (FWTV…LFIW), 90-110 (IAPL…MDLI), 132-154 (SADV…YYSI), 208-228 (LIFI…LSVP), and 230-250 (AIFH…LTIV).

This sequence belongs to the ATPase A chain family. In terms of assembly, F-type ATPases have 2 components, CF(1) - the catalytic core - and CF(0) - the membrane proton channel. CF(1) has five subunits: alpha(3), beta(3), gamma(1), delta(1), epsilon(1). CF(0) has three main subunits: a(1), b(2) and c(9-12). The alpha and beta chains form an alternating ring which encloses part of the gamma chain. CF(1) is attached to CF(0) by a central stalk formed by the gamma and epsilon chains, while a peripheral stalk is formed by the delta and b chains.

Its subcellular location is the cell inner membrane. Its function is as follows. Key component of the proton channel; it plays a direct role in the translocation of protons across the membrane. This chain is ATP synthase subunit a, found in Aeromonas hydrophila subsp. hydrophila (strain ATCC 7966 / DSM 30187 / BCRC 13018 / CCUG 14551 / JCM 1027 / KCTC 2358 / NCIMB 9240 / NCTC 8049).